We begin with the raw amino-acid sequence, 314 residues long: tRNA dimethylallyltransferase (314 aa).

12–19 (GPTASGKT) is an ATP binding site. 14–19 (TASGKT) serves as a coordination point for substrate. Interaction with substrate tRNA regions lie at residues 37–40 (DSAL), 161–165 (QRIQR), and 244–249 (RCVGYR).

Belongs to the IPP transferase family. In terms of assembly, monomer. It depends on Mg(2+) as a cofactor.

The enzyme catalyses adenosine(37) in tRNA + dimethylallyl diphosphate = N(6)-dimethylallyladenosine(37) in tRNA + diphosphate. Its function is as follows. Catalyzes the transfer of a dimethylallyl group onto the adenine at position 37 in tRNAs that read codons beginning with uridine, leading to the formation of N6-(dimethylallyl)adenosine (i(6)A). The chain is tRNA dimethylallyltransferase from Janthinobacterium sp. (strain Marseille) (Minibacterium massiliensis).